The sequence spans 619 residues: Dihydroxy-acid dehydratase (619 aa).

Position 81 (Asp-81) interacts with Mg(2+). A [2Fe-2S] cluster-binding site is contributed by Cys-122. Residues Asp-123 and Lys-124 each contribute to the Mg(2+) site. Lys-124 is subject to N6-carboxylysine. Cys-195 is a binding site for [2Fe-2S] cluster. Glu-494 contributes to the Mg(2+) binding site. Ser-520 (proton acceptor) is an active-site residue.

It belongs to the IlvD/Edd family. As to quaternary structure, homodimer. It depends on [2Fe-2S] cluster as a cofactor. Requires Mg(2+) as cofactor.

The catalysed reaction is (2R)-2,3-dihydroxy-3-methylbutanoate = 3-methyl-2-oxobutanoate + H2O. The enzyme catalyses (2R,3R)-2,3-dihydroxy-3-methylpentanoate = (S)-3-methyl-2-oxopentanoate + H2O. Its pathway is amino-acid biosynthesis; L-isoleucine biosynthesis; L-isoleucine from 2-oxobutanoate: step 3/4. The protein operates within amino-acid biosynthesis; L-valine biosynthesis; L-valine from pyruvate: step 3/4. Functions in the biosynthesis of branched-chain amino acids. Catalyzes the dehydration of (2R,3R)-2,3-dihydroxy-3-methylpentanoate (2,3-dihydroxy-3-methylvalerate) into 2-oxo-3-methylpentanoate (2-oxo-3-methylvalerate) and of (2R)-2,3-dihydroxy-3-methylbutanoate (2,3-dihydroxyisovalerate) into 2-oxo-3-methylbutanoate (2-oxoisovalerate), the penultimate precursor to L-isoleucine and L-valine, respectively. The polypeptide is Dihydroxy-acid dehydratase (Shewanella denitrificans (strain OS217 / ATCC BAA-1090 / DSM 15013)).